A 403-amino-acid polypeptide reads, in one-letter code: Large ribosomal subunit protein uL3 (403 aa).

The disordered stretch occupies residues Met-1–Pro-37. Ser-13 is subject to Phosphoserine. The span at Pro-18 to Ser-31 shows a compositional bias: basic residues. Residue Lys-39 forms a Glycyl lysine isopeptide (Lys-Gly) (interchain with G-Cter in SUMO2) linkage. At Lys-136 the chain carries N6-acetyllysine. Residues Lys-224 and Lys-226 each participate in a glycyl lysine isopeptide (Lys-Gly) (interchain with G-Cter in SUMO2) cross-link. A Tele-methylhistidine modification is found at His-245. Lys-286 and Lys-294 each carry N6-acetyllysine; alternate. Lys-286 participates in a covalent cross-link: Glycyl lysine isopeptide (Lys-Gly) (interchain with G-Cter in SUMO2); alternate. A Glycyl lysine isopeptide (Lys-Gly) (interchain with G-Cter in SUMO1); alternate cross-link involves residue Lys-294. The residue at position 304 (Ser-304) is a Phosphoserine. Lys-366 is subject to N6-acetyllysine; alternate. Residue Lys-366 forms a Glycyl lysine isopeptide (Lys-Gly) (interchain with G-Cter in SUMO2); alternate linkage. Lys-373 is subject to N6-acetyllysine. Residues Lys-386, Lys-393, and Lys-399 each participate in a glycyl lysine isopeptide (Lys-Gly) (interchain with G-Cter in SUMO2) cross-link.

Belongs to the universal ribosomal protein uL3 family. In terms of assembly, component of the large ribosomal subunit. Interacts with DHX33. Constitutively monomethylated at His-245 by METTL18. Methylation at His-245 regulates translation elongation by slowing ribosome traversal on tyrosine codons: slower elongation provides enough time for proper folding of synthesized proteins and prevents cellular aggregation of tyrosine-rich proteins It is not required for incorporation of RPL3 into ribosomes.

Its subcellular location is the nucleus. It is found in the nucleolus. The protein localises to the cytoplasm. Component of the large ribosomal subunit. The ribosome is a large ribonucleoprotein complex responsible for the synthesis of proteins in the cell. The chain is Large ribosomal subunit protein uL3 (RPL3) from Macaca fascicularis (Crab-eating macaque).